A 538-amino-acid polypeptide reads, in one-letter code: ATP-dependent rRNA helicase RRP3 (538 aa).

Over residues 1-11 the composition is skewed to basic residues; sequence MSSAKRVKLSH. A disordered region spans residues 1 to 112; sequence MSSAKRVKLS…SKEETPTKSF (112 aa). Positions 34 to 47 are enriched in low complexity; it reads KKITQAPKAAAPIK. Residues 53-85 are compositionally biased toward acidic residues; it reads AEEDDDDDDKDDKDEEDEEQNDDSSDEASENDD. Positions 92 to 112 are enriched in basic and acidic residues; that stretch reads EATKEGQTELPSKEETPTKSF. Positions 110–138 match the Q motif motif; it reads KSFRDLGIVEPLCEACEALKFKKPTPIQE. The Helicase ATP-binding domain maps to 141-312; that stretch reads IPLALQGRDV…RASLRDPLKV (172 aa). 154-161 is an ATP binding site; that stretch reads AETGSGKT. Residues 260–263 carry the DEAD box motif; it reads DEAD. The Helicase C-terminal domain maps to 336–486; that stretch reads HKDVYLIYLA…LFQPDKEEVM (151 aa). Basic and acidic residues predominate over residues 498 to 512; that stretch reads HAREEMKALHEDRGK. Residues 498–538 form a disordered region; the sequence is HAREEMKALHEDRGKKGAVLKGRKRGSATKRRHDDMDAEEG. The span at 513 to 528 shows a compositional bias: basic residues; that stretch reads KGAVLKGRKRGSATKR.

The protein belongs to the DEAD box helicase family. DDX47/RRP3 subfamily. As to quaternary structure, interacts with the SSU processome.

Its subcellular location is the nucleus. It carries out the reaction ATP + H2O = ADP + phosphate + H(+). Functionally, ATP-dependent rRNA helicase required for pre-ribosomal RNA processing. Involved in the maturation of the 35S-pre-rRNA and to its cleavage to mature 18S rRNA. This Pyricularia oryzae (strain 70-15 / ATCC MYA-4617 / FGSC 8958) (Rice blast fungus) protein is ATP-dependent rRNA helicase RRP3.